Reading from the N-terminus, the 465-residue chain is GTPase Der (465 aa).

2 EngA-type G domains span residues 3–166 and 184–358; these read FLVA…LNEY and IHFS…ACAN. Residues 9–16, 56–60, 118–121, 190–197, 237–241, and 302–305 contribute to the GTP site; these read GRANVGKS, DTGGI, NKVD, GRPNVGKS, DTAGV, and NKWD. The KH-like domain maps to 359–443; the sequence is KKITTADATR…PIVFEFKQSE (85 aa). The disordered stretch occupies residues 446-465; sequence FADRKNKRSKDEGSKSKKVK.

Belongs to the TRAFAC class TrmE-Era-EngA-EngB-Septin-like GTPase superfamily. EngA (Der) GTPase family. As to quaternary structure, associates with the 50S ribosomal subunit.

In terms of biological role, GTPase that plays an essential role in the late steps of ribosome biogenesis. This Francisella tularensis subsp. holarctica (strain FTNF002-00 / FTA) protein is GTPase Der.